Reading from the N-terminus, the 32-residue chain is DNA-binding protein HU (32 aa).

Belongs to the bacterial histone-like protein family.

Histone-like DNA-binding protein which is capable of wrapping DNA to stabilize it, and thus to prevent its denaturation under extreme environmental conditions. The protein is DNA-binding protein HU (hup) of Synechocystis sp. (strain PCC 6701).